Here is a 323-residue protein sequence, read N- to C-terminus: Phospho-N-acetylmuramoyl-pentapeptide-transferase (323 aa).

9 helical membrane passes run isoleucine 12 to proline 32, proline 58 to glycine 78, alanine 84 to leucine 104, methionine 120 to threonine 140, isoleucine 151 to alanine 171, glycine 177 to serine 197, leucine 200 to leucine 220, valine 229 to leucine 250, and lysine 303 to leucine 323.

Belongs to the glycosyltransferase 4 family. MraY subfamily. The cofactor is Mg(2+).

It is found in the cell membrane. The catalysed reaction is UDP-N-acetyl-alpha-D-muramoyl-L-alanyl-gamma-D-glutamyl-meso-2,6-diaminopimeloyl-D-alanyl-D-alanine + di-trans,octa-cis-undecaprenyl phosphate = di-trans,octa-cis-undecaprenyl diphospho-N-acetyl-alpha-D-muramoyl-L-alanyl-D-glutamyl-meso-2,6-diaminopimeloyl-D-alanyl-D-alanine + UMP. The protein operates within cell wall biogenesis; peptidoglycan biosynthesis. Its function is as follows. Catalyzes the initial step of the lipid cycle reactions in the biosynthesis of the cell wall peptidoglycan: transfers peptidoglycan precursor phospho-MurNAc-pentapeptide from UDP-MurNAc-pentapeptide onto the lipid carrier undecaprenyl phosphate, yielding undecaprenyl-pyrophosphoryl-MurNAc-pentapeptide, known as lipid I. This Clostridium perfringens (strain SM101 / Type A) protein is Phospho-N-acetylmuramoyl-pentapeptide-transferase.